A 427-amino-acid chain; its full sequence is Diaminobutyrate--2-oxoglutarate transaminase (427 aa).

An N6-(pyridoxal phosphate)lysine modification is found at Lys269.

Belongs to the class-III pyridoxal-phosphate-dependent aminotransferase family. Pyridoxal 5'-phosphate is required as a cofactor.

It carries out the reaction L-2,4-diaminobutanoate + 2-oxoglutarate = L-aspartate 4-semialdehyde + L-glutamate. It participates in amine and polyamine biosynthesis; ectoine biosynthesis; L-ectoine from L-aspartate 4-semialdehyde: step 1/3. Functionally, catalyzes reversively the conversion of L-aspartate beta-semialdehyde (ASA) to L-2,4-diaminobutyrate (DABA) by transamination with L-glutamate. This chain is Diaminobutyrate--2-oxoglutarate transaminase (ectB), found in Marinococcus halophilus.